The chain runs to 259 residues: Cytosolic Fe-S cluster assembly factor Nubp2 homolog (259 aa).

Position 14–21 (14–21 (GKGGVGKS)) interacts with ATP. [4Fe-4S] cluster-binding residues include Cys-188 and Cys-191.

This sequence belongs to the Mrp/NBP35 ATP-binding proteins family. NUBP2/CFD1 subfamily. As to quaternary structure, heterotetramer of 2 Nubp1 and 2 Nubp2 chains. [4Fe-4S] cluster serves as cofactor.

It is found in the cytoplasm. In terms of biological role, component of the cytosolic iron-sulfur (Fe/S) protein assembly (CIA) machinery. Required for maturation of extramitochondrial Fe-S proteins. The Nubp1-Nubp2 heterotetramer forms a Fe-S scaffold complex, mediating the de novo assembly of an Fe-S cluster and its transfer to target apoproteins. In Aedes aegypti (Yellowfever mosquito), this protein is Cytosolic Fe-S cluster assembly factor Nubp2 homolog.